Here is a 501-residue protein sequence, read N- to C-terminus: Beta-secretase 1 (501 aa).

Positions 1–21 (MAPALHWLLLWVGSGMLPAQG) are cleaved as a signal peptide. Residues 22–45 (THLGIRLPLRSGLAGPPLGLRLPR) constitute a propeptide that is removed on maturation. Topologically, residues 22-457 (THLGIRLPLR…PQTDESTLMT (436 aa)) are extracellular. A disordered region spans residues 39–58 (LGLRLPRETDEESEEPGRRG). The 342-residue stretch at 75 to 416 (YYVEMTVGSP…DRARKRIGFA (342 aa)) folds into the Peptidase A1 domain. Aspartate 93 is an active-site residue. Lysine 126 carries the N6-acetyllysine modification. N-linked (GlcNAc...) asparagine glycans are attached at residues asparagine 153, asparagine 172, and asparagine 223. Disulfide bonds link cysteine 216–cysteine 420, cysteine 278–cysteine 443, and cysteine 330–cysteine 380. N6-acetyllysine is present on residues lysine 275, lysine 279, and lysine 285. The active site involves aspartate 289. Lysine 299, lysine 300, and lysine 307 each carry N6-acetyllysine. An N-linked (GlcNAc...) asparagine glycan is attached at asparagine 354. A helical transmembrane segment spans residues 458-478 (IAYVMAAICALFMLPLCLMVC). 4 S-palmitoyl cysteine lipidation sites follow: cysteine 474, cysteine 478, cysteine 482, and cysteine 485. At 479 to 501 (QWRCLRCLRHQHDDFADDISLLK) the chain is on the cytoplasmic side. The tract at residues 479 to 501 (QWRCLRCLRHQHDDFADDISLLK) is interaction with RTN3. Residues 496–500 (DISLL) carry the DXXLL motif. Serine 498 is modified (phosphoserine). Residue lysine 501 forms a Glycyl lysine isopeptide (Lys-Gly) (interchain with G-Cter in ubiquitin) linkage.

Belongs to the peptidase A1 family. As to quaternary structure, monomer. Interacts (via DXXLL motif) with GGA1, GGA2 and GGA3 (via their VHS domain); the interaction highly increases when BACE1 is phosphorylated at Ser-498. Interacts with RTN1; RTN2; RTN3 and RTN4; the interaction leads to inhibition of amyloid precursor protein processing. Interacts with SNX6. Interacts with PCSK9. Interacts with NAT8 and NAT8B. Interacts with BIN1. Interacts (via extracellular domain) with ADAM10 (via extracellular domain). Interacts with SORL1; this interaction may affect binding with APP and hence reduce APP cleavage. Interacts with NRDC AND NRG1. Post-translationally, N-Glycosylated. Addition of a bisecting N-acetylglucosamine by MGAT3 blocks lysosomal targeting, further degradation and is required for maintaining stability under stress conditions. Palmitoylation mediates lipid raft localization. In terms of processing, acetylated in the endoplasmic reticulum at Lys-126, Lys-275, Lys-279, Lys-285, Lys-299, Lys-300 and Lys-307. Acetylation by NAT8 and NAT8B is transient and deacetylation probably occurs in the Golgi. Acetylation regulates the maturation, the transport to the plasma membrane, the stability and the expression of the protein. Post-translationally, ubiquitinated at Lys-501, ubiquitination leads to lysosomal degradation. Monoubiquitinated and 'Lys-63'-linked polyubitinated. Deubiquitnated by USP8; inhibits lysosomal degradation. Phosphorylation at Ser-498 is required for interaction with GGA1 and retrograded transport from endosomal compartments to the trans-Golgi network. Non-phosphorylated BACE1 enters a direct recycling route to the cell surface. Expressed in the brain, specifically in neurons and astrocytes (at protein level).

The protein localises to the cell membrane. It localises to the golgi apparatus. The protein resides in the trans-Golgi network. It is found in the endoplasmic reticulum. Its subcellular location is the endosome. The protein localises to the late endosome. It localises to the early endosome. The protein resides in the cell surface. It is found in the cytoplasmic vesicle membrane. Its subcellular location is the membrane raft. The protein localises to the lysosome. It localises to the recycling endosome. The protein resides in the cell projection. It is found in the axon. Its subcellular location is the dendrite. The enzyme catalyses Broad endopeptidase specificity. Cleaves Glu-Val-Asn-Leu-|-Asp-Ala-Glu-Phe in the Swedish variant of Alzheimer's amyloid precursor protein.. Inhibited by RTN3 and RTN4. In terms of biological role, responsible for the proteolytic processing of the amyloid precursor protein (APP). Cleaves at the N-terminus of the A-beta peptide sequence, between residues 671 and 672 of APP, leads to the generation and extracellular release of beta-cleaved soluble APP, and a corresponding cell-associated C-terminal fragment which is later released by gamma-secretase. Cleaves CHL1. This Mus musculus (Mouse) protein is Beta-secretase 1.